We begin with the raw amino-acid sequence, 416 residues long: WD repeat-containing protein JIP5 (416 aa).

WD repeat units follow at residues 9–48 (PLSS…ENGK), 62–101 (RHKG…VEWK), and 112–151 (GFQV…TEVS). Positions 149–183 (EVSARPQQTHHPHDDYVSSLTPLPPSETSTSGYSK) are disordered. Low complexity predominate over residues 166 to 179 (SSLTPLPPSETSTS). 3 WD repeats span residues 214–255 (ISSS…DQDE), 264–308 (DGGE…ISEL), and 309–348 (SHDD…EEGN). Acidic residues-rich tracts occupy residues 343–359 (SDEE…DIEN) and 374–383 (SDEEEDSDDD). The interval 343–416 (SDEEGNDDES…VHVMAFKGLD (74 aa)) is disordered. Residues 389-400 (KGKRKKRKRGKG) show a composition bias toward basic residues.

Belongs to the WD repeat WDR55 family.

It localises to the nucleus. The protein resides in the nucleolus. This Coccidioides immitis (strain RS) (Valley fever fungus) protein is WD repeat-containing protein JIP5 (JIP5).